Reading from the N-terminus, the 338-residue chain is Uroporphyrinogen decarboxylase (338 aa).

Residues 23–27 (RQAGR), Asp-72, Tyr-146, Thr-201, and His-312 contribute to the substrate site.

It belongs to the uroporphyrinogen decarboxylase family. As to quaternary structure, homodimer.

The protein resides in the cytoplasm. It carries out the reaction uroporphyrinogen III + 4 H(+) = coproporphyrinogen III + 4 CO2. It participates in porphyrin-containing compound metabolism; protoporphyrin-IX biosynthesis; coproporphyrinogen-III from 5-aminolevulinate: step 4/4. Catalyzes the decarboxylation of four acetate groups of uroporphyrinogen-III to yield coproporphyrinogen-III. The protein is Uroporphyrinogen decarboxylase of Thermodesulfovibrio yellowstonii (strain ATCC 51303 / DSM 11347 / YP87).